Here is a 165-residue protein sequence, read N- to C-terminus: Type 3 secretion system regulator YopR (165 aa).

This sequence belongs to the YopR family.

The protein resides in the secreted. May be involved in the regulation of the assembly of the type III secretion system (T3SS), also called injectisome, which is used to inject bacterial effector proteins into eukaryotic host cells. May control the secretion and/or polymerization of YscF/SctF, the principal component of the needle filament, thereby impacting the assembly of the T3SS. Involved in pathogenesis. This Yersinia pseudotuberculosis serotype I (strain IP32953) protein is Type 3 secretion system regulator YopR.